The following is a 55-amino-acid chain: MYNAPMAQDMSYYEHVQRRHEEKGCLYACIFTALCCFCCYETCECCLDCLCCCCN.

The helical transmembrane segment at 24–40 (GCLYACIFTALCCFCCY) threads the bilayer.

It belongs to the CYSTM1 family. Expressed in roots and shoots.

It is found in the cell membrane. The protein localises to the secreted. It localises to the cell wall. Confers resistance to heavy metal ions (e.g. cadmium (CdCl(2)) and copper (CuCl(2))) by chelating them at the plasma membrane of root cells, thus stopping their entry and reducing their accumulation. Binds to aluminium (Al). This is Protein CADMIUM TOLERANCE 1 from Oryza sativa subsp. japonica (Rice).